Reading from the N-terminus, the 246-residue chain is 1-(5-phosphoribosyl)-5-[(5-phosphoribosylamino)methylideneamino] imidazole-4-carboxamide isomerase (246 aa).

Aspartate 8 acts as the Proton acceptor in catalysis. Aspartate 129 acts as the Proton donor in catalysis.

Belongs to the HisA/HisF family.

The protein resides in the cytoplasm. The catalysed reaction is 1-(5-phospho-beta-D-ribosyl)-5-[(5-phospho-beta-D-ribosylamino)methylideneamino]imidazole-4-carboxamide = 5-[(5-phospho-1-deoxy-D-ribulos-1-ylimino)methylamino]-1-(5-phospho-beta-D-ribosyl)imidazole-4-carboxamide. It functions in the pathway amino-acid biosynthesis; L-histidine biosynthesis; L-histidine from 5-phospho-alpha-D-ribose 1-diphosphate: step 4/9. This Methylocella silvestris (strain DSM 15510 / CIP 108128 / LMG 27833 / NCIMB 13906 / BL2) protein is 1-(5-phosphoribosyl)-5-[(5-phosphoribosylamino)methylideneamino] imidazole-4-carboxamide isomerase.